A 246-amino-acid polypeptide reads, in one-letter code: mRNA-decapping protein g5R (246 aa).

One can recognise a Nudix hydrolase domain in the interval 91-239 (KYQKFKKNWL…IIGPAFNFIK (149 aa)). The short motif at 128–149 (GKPKENESDLACAIREFEEETG) is the Nudix box element. Glu-134 lines the Mg(2+) pocket. The Nucleophile role is filled by Glu-143. 2 residues coordinate Mg(2+): Glu-147 and Glu-169.

It belongs to the Nudix hydrolase family. DIPP subfamily. In terms of assembly, interacts with host RPL23A. Requires Mg(2+) as cofactor. The cofactor is Mn(2+).

Its subcellular location is the host rough endoplasmic reticulum. It carries out the reaction diphospho-myo-inositol polyphosphate + H2O = myo-inositol polyphosphate + phosphate.. Its function is as follows. Decapping enzyme required for the removal of the 5'-end m7GpppN cap tethered to viral and host mRNAs to allow their decay in cells. May therefore accelerate viral and cellular mRNA turnover to eliminate competing host mRNAs and allow stage-specific synthesis of viral proteins. Acceleration of the turnover of cellular transcripts may even promote the shutoff of host protein synthesis. In addition to the mRNA cap, g5R also efficiently hydrolyzes diphosphoinositol polyphosphates. Down-regulation of the level of PP-InsP5 (diphosphoinositol pentakisphosphate) may play a role in viral manipulation of the cellular secretory pathway, a step necessary for the formation of virions. Binds viral and cellular poly(A) mRNAs, thereby decreasing both types of mRNAs. This is mRNA-decapping protein g5R from African swine fever virus (isolate Pig/Kenya/KEN-50/1950) (ASFV).